The chain runs to 506 residues: Exoglucanase (506 aa).

A signal peptide spans 1–18 (MFPRSILLALSLTAVALG). Residues 19–450 (QQVGTNMAEN…IKFGDINSTF (432 aa)) are catalytic. Residue E227 is the Nucleophile of the active site. Residue E232 is the Proton donor of the active site. N308 carries N-linked (GlcNAc...) asparagine glycosylation. The interval 405 to 426 (ASPSQPGISRGTCSRDSGKPED) is disordered. Residues 406 to 419 (SPSQPGISRGTCSR) show a composition bias toward polar residues. N447 carries N-linked (GlcNAc...) asparagine glycosylation. Residues 449 to 472 (TFNNNGGGGGNPSPTTTRPNSPAQ) form a disordered region. Positions 451 to 473 (NNNGGGGGNPSPTTTRPNSPAQT) are linker. The segment covering 460–470 (PSPTTTRPNSP) has biased composition (low complexity). In terms of domain architecture, CBM1 spans 470–506 (PAQTMWGQCGGQGWTGPTACQSPSTCHVINDFYSQCF). 2 disulfide bridges follow: C478–C495 and C489–C505.

It belongs to the glycosyl hydrolase 7 (cellulase C) family.

The catalysed reaction is Hydrolysis of (1-&gt;4)-beta-D-glucosidic linkages in cellulose and cellotetraose, releasing cellobiose from the non-reducing ends of the chains.. The biological conversion of cellulose to glucose generally requires three types of hydrolytic enzymes: (1) Endoglucanases which cut internal beta-1,4-glucosidic bonds; (2) Exocellobiohydrolases that cut the disaccharide cellobiose from the non-reducing end of the cellulose polymer chain; (3) Beta-1,4-glucosidases which hydrolyze the cellobiose and other short cello-oligosaccharides to glucose. The protein is Exoglucanase (cel2) of Agaricus bisporus (White button mushroom).